The primary structure comprises 346 residues: Biotin synthase (346 aa).

Positions 38–256 (RQVQVSTLLS…IAVARIMMPT (219 aa)) constitute a Radical SAM core domain. [4Fe-4S] cluster is bound by residues C53, C57, and C60. [2Fe-2S] cluster contacts are provided by C97, C128, C188, and R260.

The protein belongs to the radical SAM superfamily. Biotin synthase family. Homodimer. [4Fe-4S] cluster serves as cofactor. The cofactor is [2Fe-2S] cluster.

It catalyses the reaction (4R,5S)-dethiobiotin + (sulfur carrier)-SH + 2 reduced [2Fe-2S]-[ferredoxin] + 2 S-adenosyl-L-methionine = (sulfur carrier)-H + biotin + 2 5'-deoxyadenosine + 2 L-methionine + 2 oxidized [2Fe-2S]-[ferredoxin]. It functions in the pathway cofactor biosynthesis; biotin biosynthesis; biotin from 7,8-diaminononanoate: step 2/2. Catalyzes the conversion of dethiobiotin (DTB) to biotin by the insertion of a sulfur atom into dethiobiotin via a radical-based mechanism. This Shigella boydii serotype 18 (strain CDC 3083-94 / BS512) protein is Biotin synthase.